The chain runs to 127 residues: Fluoride-specific ion channel FluC (127 aa).

Helical transmembrane passes span 4 to 24 (LLLVAAGGAVGSVARYLVGVG), 36 to 56 (GTFTVNVVGGFLMGCLASWLA), 72 to 92 (VGVLGGFTTFSSFSLETALMI), and 101 to 121 (FTYSAASVLLAIAALFAGLLV). The Na(+) site is built by Gly76 and Thr79.

Belongs to the fluoride channel Fluc/FEX (TC 1.A.43) family.

It is found in the cell inner membrane. The enzyme catalyses fluoride(in) = fluoride(out). With respect to regulation, na(+) is not transported, but it plays an essential structural role and its presence is essential for fluoride channel function. Fluoride-specific ion channel. Important for reducing fluoride concentration in the cell, thus reducing its toxicity. This is Fluoride-specific ion channel FluC from Caulobacter vibrioides (strain ATCC 19089 / CIP 103742 / CB 15) (Caulobacter crescentus).